Consider the following 400-residue polypeptide: Putative F-box protein At5g41510 (400 aa).

Residues 2–47 form the F-box domain; the sequence is ATMISNLPRDLIEEIFSRVPLTSMKAVRLTCKSWNNLSKSESFTKV.

In Arabidopsis thaliana (Mouse-ear cress), this protein is Putative F-box protein At5g41510.